We begin with the raw amino-acid sequence, 357 residues long: Snake venom metalloproteinase H4 (357 aa).

Positions 1-6 (FPYQGS) are cleaved as a signal peptide. Positions 7 to 176 (SIMLESGKVN…KKASQLIVST (170 aa)) are excised as a propeptide. Residues 180 to 357 (RYMEIVIVVD…EVIKYFLDSK (178 aa)) enclose the Peptidase M12B domain. Position 316 (His316) interacts with Zn(2+). Glu317 is a catalytic residue. Zn(2+)-binding residues include His320 and His326. The cysteines at positions 333 and 339 are disulfide-linked.

It belongs to the venom metalloproteinase (M12B) family. P-I subfamily. As to quaternary structure, monomer. Zn(2+) is required as a cofactor. Expressed by the venom gland.

The protein resides in the secreted. Snake venom metalloproteinase that impairs hemostasis in the envenomed animal. The polypeptide is Snake venom metalloproteinase H4 (Deinagkistrodon acutus (Hundred-pace snake)).